The primary structure comprises 240 residues: Putative glycyl-radical enzyme activating enzyme MJ1227 (240 aa).

One can recognise a Radical SAM core domain in the interval 14 to 232 (IDYPKKASAV…KKYIDNVVIR (219 aa)). Residues C29, C33, and C36 each contribute to the [4Fe-4S] cluster site. Residues 35 to 37 (YCH), G71, and 126 to 128 (FDK) contribute to the S-adenosyl-L-methionine site.

It belongs to the organic radical-activating enzymes family. [4Fe-4S] cluster is required as a cofactor.

The enzyme catalyses glycyl-[protein] + reduced [flavodoxin] + S-adenosyl-L-methionine = glycin-2-yl radical-[protein] + semiquinone [flavodoxin] + 5'-deoxyadenosine + L-methionine + H(+). This chain is Putative glycyl-radical enzyme activating enzyme MJ1227, found in Methanocaldococcus jannaschii (strain ATCC 43067 / DSM 2661 / JAL-1 / JCM 10045 / NBRC 100440) (Methanococcus jannaschii).